The primary structure comprises 152 residues: Xanthine-guanine phosphoribosyltransferase (152 aa).

Residues 37-38 (RG), R69, and 88-96 (DDLVDTGGT) each bind 5-phospho-alpha-D-ribose 1-diphosphate. Residue R69 coordinates GMP. Residue D89 participates in Mg(2+) binding. Positions 92 and 135 each coordinate guanine. Positions 92 and 135 each coordinate xanthine. GMP is bound by residues 92–96 (DTGGT) and 134–135 (WI).

It belongs to the purine/pyrimidine phosphoribosyltransferase family. XGPT subfamily. As to quaternary structure, homotetramer. Mg(2+) is required as a cofactor.

Its subcellular location is the cell inner membrane. It catalyses the reaction GMP + diphosphate = guanine + 5-phospho-alpha-D-ribose 1-diphosphate. The catalysed reaction is XMP + diphosphate = xanthine + 5-phospho-alpha-D-ribose 1-diphosphate. It carries out the reaction IMP + diphosphate = hypoxanthine + 5-phospho-alpha-D-ribose 1-diphosphate. Its pathway is purine metabolism; GMP biosynthesis via salvage pathway; GMP from guanine: step 1/1. It functions in the pathway purine metabolism; XMP biosynthesis via salvage pathway; XMP from xanthine: step 1/1. Purine salvage pathway enzyme that catalyzes the transfer of the ribosyl-5-phosphate group from 5-phospho-alpha-D-ribose 1-diphosphate (PRPP) to the N9 position of the 6-oxopurines guanine and xanthine to form the corresponding ribonucleotides GMP (guanosine 5'-monophosphate) and XMP (xanthosine 5'-monophosphate), with the release of PPi. To a lesser extent, also acts on hypoxanthine. This is Xanthine-guanine phosphoribosyltransferase from Escherichia coli O7:K1 (strain IAI39 / ExPEC).